The chain runs to 281 residues: Ribosomal protein L11 methyltransferase (281 aa).

Residues threonine 133, glycine 154, aspartate 175, and asparagine 216 each contribute to the S-adenosyl-L-methionine site.

Belongs to the methyltransferase superfamily. PrmA family.

The protein localises to the cytoplasm. The catalysed reaction is L-lysyl-[protein] + 3 S-adenosyl-L-methionine = N(6),N(6),N(6)-trimethyl-L-lysyl-[protein] + 3 S-adenosyl-L-homocysteine + 3 H(+). Methylates ribosomal protein L11. The polypeptide is Ribosomal protein L11 methyltransferase (Campylobacter jejuni subsp. jejuni serotype O:6 (strain 81116 / NCTC 11828)).